The sequence spans 279 residues: Diaminopimelate epimerase 1 (279 aa).

Residues Asn13 and Asn66 each coordinate substrate. Cys75 acts as the Proton donor in catalysis. Residues 76-77 (GN), Asn164, Asn197, and 215-216 (ER) contribute to the substrate site. Cys224 acts as the Proton acceptor in catalysis. Residue 225–226 (GT) coordinates substrate.

This sequence belongs to the diaminopimelate epimerase family. As to quaternary structure, homodimer.

It localises to the cytoplasm. It catalyses the reaction (2S,6S)-2,6-diaminopimelate = meso-2,6-diaminopimelate. The protein operates within amino-acid biosynthesis; L-lysine biosynthesis via DAP pathway; DL-2,6-diaminopimelate from LL-2,6-diaminopimelate: step 1/1. Its function is as follows. Catalyzes the stereoinversion of LL-2,6-diaminopimelate (L,L-DAP) to meso-diaminopimelate (meso-DAP), a precursor of L-lysine and an essential component of the bacterial peptidoglycan. This chain is Diaminopimelate epimerase 1, found in Nostoc sp. (strain PCC 7120 / SAG 25.82 / UTEX 2576).